Consider the following 102-residue polypeptide: MEPVDPRLEPWKHPGSQPKTACNNCYCKKCCYHCQVCFLTKGLGISYGRKKRRQRRGPPQGSQTHQVSLSKQPTSQPRGDPTGPKESKEKVERETETDPAVQ.

Residues 1–24 (MEPVDPRLEPWKHPGSQPKTACNN) are interaction with human CREBBP. The transactivation stretch occupies residues 1-48 (MEPVDPRLEPWKHPGSQPKTACNNCYCKKCCYHCQVCFLTKGLGISYG). Residues Cys22, Cys25, and Cys27 each contribute to the Zn(2+) site. The segment at 22–37 (CNNCYCKKCCYHCQVC) is cysteine-rich. Lys28 bears the N6-acetyllysine; by host PCAF mark. Zn(2+) is bound by residues Cys30, His33, Cys34, and Cys37. A core region spans residues 38-48 (FLTKGLGISYG). Residues 48 to 102 (GRKKRRQRRGPPQGSQTHQVSLSKQPTSQPRGDPTGPKESKEKVERETETDPAVQ) form a disordered region. Positions 49-57 (RKKRRQRRG) match the Nuclear localization signal, RNA-binding (TAR), and protein transduction motif. Positions 49–86 (RKKRRQRRGPPQGSQTHQVSLSKQPTSQPRGDPTGPKE) are interaction with the host capping enzyme RNGTT. 2 positions are modified to N6-acetyllysine; by host EP300 and GCN5L2: Lys50 and Lys51. Asymmetric dimethylarginine; by host PRMT6 is present on residues Arg52 and Arg53. Residues 62-77 (SQTHQVSLSKQPTSQP) show a composition bias toward polar residues. A Glycyl lysine isopeptide (Lys-Gly) (interchain with G-Cter in ubiquitin) cross-link involves residue Lys71. The Cell attachment site motif lies at 78-80 (RGD). Positions 83–96 (GPKESKEKVERETE) are enriched in basic and acidic residues.

The protein belongs to the lentiviruses Tat family. Interacts with host CCNT1. Associates with the P-TEFb complex composed at least of Tat, P-TEFb (CDK9 and CCNT1), TAR RNA, RNA Pol II. Recruits the HATs CREBBP, TAF1/TFIID, EP300, PCAF and GCN5L2. Interacts with host KAT5/Tip60; this interaction targets the latter to degradation. Interacts with the host deacetylase SIRT1. Interacts with host capping enzyme RNGTT; this interaction stimulates RNGTT. Binds to host KDR, and to the host integrins ITGAV/ITGB3 and ITGA5/ITGB1. Interacts with host KPNB1/importin beta-1 without previous binding to KPNA1/importin alpha-1. Interacts with EIF2AK2. Interacts with host nucleosome assembly protein NAP1L1; this interaction may be required for the transport of Tat within the nucleus, since the two proteins interact at the nuclear rim. Interacts with host C1QBP/SF2P32; this interaction involves lysine-acetylated Tat. Interacts with the host chemokine receptors CCR2, CCR3 and CXCR4. Interacts with host DPP4/CD26; this interaction may trigger an anti-proliferative effect. Interacts with host LDLR. Interacts with the host extracellular matrix metalloproteinase MMP1. Interacts with host PRMT6; this interaction mediates Tat's methylation. Interacts with, and is ubiquitinated by MDM2/Hdm2. Interacts with host PSMC3 and HTATIP2. Interacts with STAB1; this interaction may overcome SATB1-mediated repression of IL2 and IL2RA (interleukin) in T cells by binding to the same domain than HDAC1. Interacts (when acetylated) with human CDK13, thereby increasing HIV-1 mRNA splicing and promoting the production of the doubly spliced HIV-1 protein Nef. Interacts with host TBP; this interaction modulates the activity of transcriptional pre-initiation complex. Interacts with host RELA. Interacts with host PLSCR1; this interaction negatively regulates Tat transactivation activity by altering its subcellular distribution. Asymmetrical arginine methylation by host PRMT6 seems to diminish the transactivation capacity of Tat and affects the interaction with host CCNT1. In terms of processing, acetylation by EP300, CREBBP, GCN5L2/GCN5 and PCAF regulates the transactivation activity of Tat. EP300-mediated acetylation of Lys-50 promotes dissociation of Tat from the TAR RNA through the competitive binding to PCAF's bromodomain. In addition, the non-acetylated Tat's N-terminus can also interact with PCAF. PCAF-mediated acetylation of Lys-28 enhances Tat's binding to CCNT1. Lys-50 is deacetylated by SIRT1. Post-translationally, polyubiquitination by host MDM2 does not target Tat to degradation, but activates its transactivation function and fosters interaction with CCNT1 and TAR RNA. Phosphorylated by EIF2AK2 on serine and threonine residues adjacent to the basic region important for TAR RNA binding and function. Phosphorylation of Tat by EIF2AK2 is dependent on the prior activation of EIF2AK2 by dsRNA.

Its subcellular location is the host nucleus. The protein localises to the host nucleolus. It is found in the host cytoplasm. It localises to the secreted. Its function is as follows. Transcriptional activator that increases RNA Pol II processivity, thereby increasing the level of full-length viral transcripts. Recognizes a hairpin structure at the 5'-LTR of the nascent viral mRNAs referred to as the transactivation responsive RNA element (TAR) and recruits the cyclin T1-CDK9 complex (P-TEFb complex) that will in turn hyperphosphorylate the RNA polymerase II to allow efficient elongation. The CDK9 component of P-TEFb and other Tat-activated kinases hyperphosphorylate the C-terminus of RNA Pol II that becomes stabilized and much more processive. Other factors such as HTATSF1/Tat-SF1, SUPT5H/SPT5, and HTATIP2 are also important for Tat's function. Besides its effect on RNA Pol II processivity, Tat induces chromatin remodeling of proviral genes by recruiting the histone acetyltransferases (HATs) CREBBP, EP300 and PCAF to the chromatin. This also contributes to the increase in proviral transcription rate, especially when the provirus integrates in transcriptionally silent region of the host genome. To ensure maximal activation of the LTR, Tat mediates nuclear translocation of NF-kappa-B by interacting with host RELA. Through its interaction with host TBP, Tat may also modulate transcription initiation. Tat can reactivate a latently infected cell by penetrating in it and transactivating its LTR promoter. In the cytoplasm, Tat is thought to act as a translational activator of HIV-1 mRNAs. Extracellular circulating Tat can be endocytosed by surrounding uninfected cells via the binding to several surface receptors such as CD26, CXCR4, heparan sulfate proteoglycans (HSPG) or LDLR. Neurons are rarely infected, but they internalize Tat via their LDLR. Through its interaction with nuclear HATs, Tat is potentially able to control the acetylation-dependent cellular gene expression. Modulates the expression of many cellular genes involved in cell survival, proliferation or in coding for cytokines or cytokine receptors. Tat plays a role in T-cell and neurons apoptosis. Tat induced neurotoxicity and apoptosis probably contribute to neuroAIDS. Circulating Tat also acts as a chemokine-like and/or growth factor-like molecule that binds to specific receptors on the surface of the cells, affecting many cellular pathways. In the vascular system, Tat binds to ITGAV/ITGB3 and ITGA5/ITGB1 integrins dimers at the surface of endothelial cells and competes with bFGF for heparin-binding sites, leading to an excess of soluble bFGF. The protein is Protein Tat of Human immunodeficiency virus type 1 group M subtype B (isolate RF/HAT3) (HIV-1).